Reading from the N-terminus, the 494-residue chain is Probable cytosol aminopeptidase (494 aa).

Residues Lys260 and Asp265 each coordinate Mn(2+). Lys272 is a catalytic residue. The Mn(2+) site is built by Asp283, Asp342, and Glu344. Arg346 is a catalytic residue.

It belongs to the peptidase M17 family. Requires Mn(2+) as cofactor.

It is found in the cytoplasm. The enzyme catalyses Release of an N-terminal amino acid, Xaa-|-Yaa-, in which Xaa is preferably Leu, but may be other amino acids including Pro although not Arg or Lys, and Yaa may be Pro. Amino acid amides and methyl esters are also readily hydrolyzed, but rates on arylamides are exceedingly low.. It catalyses the reaction Release of an N-terminal amino acid, preferentially leucine, but not glutamic or aspartic acids.. Functionally, presumably involved in the processing and regular turnover of intracellular proteins. Catalyzes the removal of unsubstituted N-terminal amino acids from various peptides. This Bacillus cereus (strain ZK / E33L) protein is Probable cytosol aminopeptidase.